Here is a 415-residue protein sequence, read N- to C-terminus: NADH-quinone oxidoreductase subunit D (415 aa).

Belongs to the complex I 49 kDa subunit family. As to quaternary structure, NDH-1 is composed of 14 different subunits. Subunits NuoB, C, D, E, F, and G constitute the peripheral sector of the complex.

It localises to the cell inner membrane. It catalyses the reaction a quinone + NADH + 5 H(+)(in) = a quinol + NAD(+) + 4 H(+)(out). In terms of biological role, NDH-1 shuttles electrons from NADH, via FMN and iron-sulfur (Fe-S) centers, to quinones in the respiratory chain. The immediate electron acceptor for the enzyme in this species is believed to be ubiquinone. Couples the redox reaction to proton translocation (for every two electrons transferred, four hydrogen ions are translocated across the cytoplasmic membrane), and thus conserves the redox energy in a proton gradient. The sequence is that of NADH-quinone oxidoreductase subunit D from Myxococcus xanthus (strain DK1622).